A 154-amino-acid polypeptide reads, in one-letter code: Transcription antitermination protein NusB (154 aa).

Residues 132 to 154 (KDKQSPQSTPLDDSDKDESDQTN) form a disordered region. The segment covering 143–154 (DDSDKDESDQTN) has biased composition (acidic residues).

Belongs to the NusB family.

Functionally, involved in transcription antitermination. Required for transcription of ribosomal RNA (rRNA) genes. Binds specifically to the boxA antiterminator sequence of the ribosomal RNA (rrn) operons. This is Transcription antitermination protein NusB from Bifidobacterium animalis subsp. lactis (strain AD011).